We begin with the raw amino-acid sequence, 99 residues long: Aspartyl/glutamyl-tRNA(Asn/Gln) amidotransferase subunit C (99 aa).

The protein belongs to the GatC family. In terms of assembly, heterotrimer of A, B and C subunits.

The catalysed reaction is L-glutamyl-tRNA(Gln) + L-glutamine + ATP + H2O = L-glutaminyl-tRNA(Gln) + L-glutamate + ADP + phosphate + H(+). It carries out the reaction L-aspartyl-tRNA(Asn) + L-glutamine + ATP + H2O = L-asparaginyl-tRNA(Asn) + L-glutamate + ADP + phosphate + 2 H(+). Functionally, allows the formation of correctly charged Asn-tRNA(Asn) or Gln-tRNA(Gln) through the transamidation of misacylated Asp-tRNA(Asn) or Glu-tRNA(Gln) in organisms which lack either or both of asparaginyl-tRNA or glutaminyl-tRNA synthetases. The reaction takes place in the presence of glutamine and ATP through an activated phospho-Asp-tRNA(Asn) or phospho-Glu-tRNA(Gln). This chain is Aspartyl/glutamyl-tRNA(Asn/Gln) amidotransferase subunit C, found in Burkholderia cenocepacia (strain ATCC BAA-245 / DSM 16553 / LMG 16656 / NCTC 13227 / J2315 / CF5610) (Burkholderia cepacia (strain J2315)).